The following is a 446-amino-acid chain: MAQKLWEKNVRVNEEIDRFTVGRDREMDLYLAKHDVLGSMAHITMLESIGLLTAGELEMLLAELKNIYASAEKGEFVIEDGIEDVHSQVELMLTRKLGDVGKKIHSGRSRNDQVLVDLKLFTRAELKEVAEEVEQLFHVLISQSNTYKDVLMPGYTHLQIAMPSSFGLWFGAYAESLVDDMMFLQAAFKMCNRNPLGSAAGYGSSFPLDREMTTRLLGFDSMDYNVVYAQMGRGKMERNVAFALASIAGTVSKMAFDACMFSSQNFGFVKLPDECTTGSSIMPHKKNPDVFELTRAKCNKLQALPQQIMMIMNNLPSGYFRDLQIIKEVFLPAFRELKECLQMAAYIMDKIKINEHILDDNRYLYIFSVEEVNRLASEGMPFRDAYKKVGLDIEAGKFTHDKKVHHTHEGSIGNLCNDRIESLMRQVVDGFNFSVMEQAERSLLGR.

This sequence belongs to the lyase 1 family. Argininosuccinate lyase subfamily.

Its subcellular location is the cytoplasm. The catalysed reaction is 2-(N(omega)-L-arginino)succinate = fumarate + L-arginine. It functions in the pathway amino-acid biosynthesis; L-arginine biosynthesis; L-arginine from L-ornithine and carbamoyl phosphate: step 3/3. The sequence is that of Argininosuccinate lyase from Phocaeicola vulgatus (strain ATCC 8482 / DSM 1447 / JCM 5826 / CCUG 4940 / NBRC 14291 / NCTC 11154) (Bacteroides vulgatus).